Reading from the N-terminus, the 413-residue chain is Multifunctional CCA protein (413 aa).

2 residues coordinate ATP: G8 and R11. The CTP site is built by G8 and R11. Residues D21 and D23 each contribute to the Mg(2+) site. Residues R91, R137, and R140 each contribute to the ATP site. 3 residues coordinate CTP: R91, R137, and R140. Positions 228 to 329 (TGVHTLMTLS…VKLFDAIDAW (102 aa)) constitute an HD domain.

The protein belongs to the tRNA nucleotidyltransferase/poly(A) polymerase family. Bacterial CCA-adding enzyme type 1 subfamily. In terms of assembly, monomer. Can also form homodimers and oligomers. Requires Mg(2+) as cofactor. Ni(2+) is required as a cofactor.

The catalysed reaction is a tRNA precursor + 2 CTP + ATP = a tRNA with a 3' CCA end + 3 diphosphate. The enzyme catalyses a tRNA with a 3' CCA end + 2 CTP + ATP = a tRNA with a 3' CCACCA end + 3 diphosphate. Functionally, catalyzes the addition and repair of the essential 3'-terminal CCA sequence in tRNAs without using a nucleic acid template. Adds these three nucleotides in the order of C, C, and A to the tRNA nucleotide-73, using CTP and ATP as substrates and producing inorganic pyrophosphate. tRNA 3'-terminal CCA addition is required both for tRNA processing and repair. Also involved in tRNA surveillance by mediating tandem CCA addition to generate a CCACCA at the 3' terminus of unstable tRNAs. While stable tRNAs receive only 3'-terminal CCA, unstable tRNAs are marked with CCACCA and rapidly degraded. This is Multifunctional CCA protein from Salmonella agona (strain SL483).